The sequence spans 229 residues: MSVLVITGTDTGVGKTVATAALACAARVAGIDVAVCKPVQTGTGPAGGTGDDDLVEIGRLAGVDALHPGWRYPDPLAPVAAAERAGAALPTRDELIGMIRAADAPGRLTLVEGAGGLLVELGQDAVTLRDVATELAAPVLVVVAPGLGTLNHTALTLESLAAQQVPCAGLVIGAWPAQPGAAEIDNRDALARLAPVRAALPAGVGSVSPVDFERISATAFDPNWLAGLL.

ATP is bound at residue 12–17 (GVGKTV). Residue threonine 16 coordinates Mg(2+). Residue lysine 37 is part of the active site. Threonine 41 contributes to the substrate binding site. Residues aspartate 53, 112–115 (EGAG), and 201–203 (PAG) each bind ATP. Mg(2+) contacts are provided by aspartate 53 and glutamate 112.

Belongs to the dethiobiotin synthetase family. As to quaternary structure, homodimer. Mg(2+) is required as a cofactor.

It is found in the cytoplasm. It carries out the reaction (7R,8S)-7,8-diammoniononanoate + CO2 + ATP = (4R,5S)-dethiobiotin + ADP + phosphate + 3 H(+). It functions in the pathway cofactor biosynthesis; biotin biosynthesis; biotin from 7,8-diaminononanoate: step 1/2. Its function is as follows. Catalyzes a mechanistically unusual reaction, the ATP-dependent insertion of CO2 between the N7 and N8 nitrogen atoms of 7,8-diaminopelargonic acid (DAPA, also called 7,8-diammoniononanoate) to form a ureido ring. The polypeptide is ATP-dependent dethiobiotin synthetase BioD (Mycobacterium sp. (strain JLS)).